Consider the following 340-residue polypeptide: Ferrochelatase (340 aa).

Positions 189 and 292 each coordinate Fe cation.

Belongs to the ferrochelatase family.

It is found in the cytoplasm. It carries out the reaction heme b + 2 H(+) = protoporphyrin IX + Fe(2+). The protein operates within porphyrin-containing compound metabolism; protoheme biosynthesis; protoheme from protoporphyrin-IX: step 1/1. Functionally, catalyzes the ferrous insertion into protoporphyrin IX. This Pseudomonas savastanoi pv. phaseolicola (strain 1448A / Race 6) (Pseudomonas syringae pv. phaseolicola (strain 1448A / Race 6)) protein is Ferrochelatase.